The primary structure comprises 95 residues: Small ribosomal subunit protein uS17 (95 aa).

The protein belongs to the universal ribosomal protein uS17 family. In terms of assembly, part of the 30S ribosomal subunit.

Functionally, one of the primary rRNA binding proteins, it binds specifically to the 5'-end of 16S ribosomal RNA. This is Small ribosomal subunit protein uS17 from Phytoplasma australiense.